The following is a 3507-amino-acid chain: Dynein axonemal heavy chain 14 (3507 aa).

The disordered stretch occupies residues 91–126 (PHLPGTQDPLRRVRDPTPIVASSPGRRRGSWSGGYG). Residues 354-381 (DEFCEEQLQQATQALKQLEDIRNKAISE) are a coiled coil. Residues 1164 to 1171 (GPAGTGKT) carry the GPAGTGKT motif motif. Residues 1164–1171 (GPAGTGKT) and 1427–1434 (GPTGGGKT) each bind ATP. The N-linked (GlcNAc...) asparagine glycan is linked to Asn-1818.

This sequence belongs to the dynein heavy chain family. As to quaternary structure, consists of at least two heavy chains and a number of intermediate and light chains.

The protein resides in the cytoplasm. It is found in the cytoskeleton. It localises to the cilium axoneme. Its function is as follows. Force generating protein of respiratory cilia. Produces force towards the minus ends of microtubules. Dynein has ATPase activity; the force-producing power stroke is thought to occur on release of ADP. Involved in sperm motility; implicated in sperm flagellar assembly. The sequence is that of Dynein axonemal heavy chain 14 (DNAH14) from Homo sapiens (Human).